A 278-amino-acid chain; its full sequence is Shikimate dehydrogenase (NADP(+)) (278 aa).

Shikimate is bound by residues serine 14 to serine 16 and threonine 61. Lysine 65 acts as the Proton acceptor in catalysis. Asparagine 86 and aspartate 102 together coordinate shikimate. NADP(+) contacts are provided by residues glycine 127 to alanine 131, asparagine 151 to lysine 156, and methionine 221. Residue tyrosine 223 coordinates shikimate. Glycine 245 contributes to the NADP(+) binding site.

Belongs to the shikimate dehydrogenase family. In terms of assembly, homodimer.

The enzyme catalyses shikimate + NADP(+) = 3-dehydroshikimate + NADPH + H(+). It functions in the pathway metabolic intermediate biosynthesis; chorismate biosynthesis; chorismate from D-erythrose 4-phosphate and phosphoenolpyruvate: step 4/7. In terms of biological role, involved in the biosynthesis of the chorismate, which leads to the biosynthesis of aromatic amino acids. Catalyzes the reversible NADPH linked reduction of 3-dehydroshikimate (DHSA) to yield shikimate (SA). In Saccharophagus degradans (strain 2-40 / ATCC 43961 / DSM 17024), this protein is Shikimate dehydrogenase (NADP(+)).